The following is a 492-amino-acid chain: UPF0236 protein TTE1650/TTE2708 (492 aa).

The protein belongs to the UPF0236 family.

The chain is UPF0236 protein TTE1650/TTE2708 from Caldanaerobacter subterraneus subsp. tengcongensis (strain DSM 15242 / JCM 11007 / NBRC 100824 / MB4) (Thermoanaerobacter tengcongensis).